The following is a 1088-amino-acid chain: TBC1 domain family member 31 (1088 aa).

Residues M1–N20 form a disordered region. WD repeat units lie at residues H33 to N74, R75 to K116, E117 to F157, Q158 to L200, A201 to L248, F249 to C296, and K297 to S334. A disordered region spans residues S356 to G381. Over residues G363–S372 the composition is skewed to polar residues. The 176-residue stretch at E432–H607 folds into the Rab-GAP TBC domain. Coiled coils occupy residues Q736–D903 and R1048–K1076.

It is found in the cytoplasm. It localises to the cytoskeleton. The protein localises to the microtubule organizing center. Its subcellular location is the centrosome. The protein resides in the centriolar satellite. It is found in the cilium basal body. In terms of biological role, molecular adapter which is involved in cilium biogenesis. Part of a functional complex including OFD1 a centriolar protein involved in cilium assembly. Could regulate the cAMP-dependent phosphorylation of OFD1, and its subsequent ubiquitination by PJA2 which ultimately leads to its proteasomal degradation. The chain is TBC1 domain family member 31 from Xenopus tropicalis (Western clawed frog).